Here is a 258-residue protein sequence, read N- to C-terminus: Hydroxyacylglutathione hydrolase (258 aa).

Residues histidine 56, histidine 58, aspartate 60, histidine 61, histidine 112, aspartate 132, and histidine 170 each contribute to the Zn(2+) site.

It belongs to the metallo-beta-lactamase superfamily. Glyoxalase II family. As to quaternary structure, monomer. Requires Zn(2+) as cofactor.

The catalysed reaction is an S-(2-hydroxyacyl)glutathione + H2O = a 2-hydroxy carboxylate + glutathione + H(+). Its pathway is secondary metabolite metabolism; methylglyoxal degradation; (R)-lactate from methylglyoxal: step 2/2. Its function is as follows. Thiolesterase that catalyzes the hydrolysis of S-D-lactoyl-glutathione to form glutathione and D-lactic acid. This Pseudomonas aeruginosa (strain LESB58) protein is Hydroxyacylglutathione hydrolase.